The sequence spans 233 residues: Probable septum site-determining protein MinC (233 aa).

Belongs to the MinC family. In terms of assembly, interacts with MinD and FtsZ.

Functionally, cell division inhibitor that blocks the formation of polar Z ring septums. Rapidly oscillates between the poles of the cell to destabilize FtsZ filaments that have formed before they mature into polar Z rings. Prevents FtsZ polymerization. The sequence is that of Probable septum site-determining protein MinC from Proteus mirabilis (strain HI4320).